The sequence spans 658 residues: Glycogen debranching enzyme (658 aa).

The active-site Nucleophile is Asp336. The Proton donor role is filled by Glu371. Positions 460-484 (ANGEENRDGSNNNHSNNHGKEGLGG) are disordered.

This sequence belongs to the glycosyl hydrolase 13 family.

It catalyses the reaction Hydrolysis of (1-&gt;6)-alpha-D-glucosidic linkages to branches with degrees of polymerization of three or four glucose residues in limit dextrin.. It functions in the pathway glycan degradation; glycogen degradation. Removes maltotriose and maltotetraose chains that are attached by 1,6-alpha-linkage to the limit dextrin main chain, generating a debranched limit dextrin. This is Glycogen debranching enzyme from Escherichia fergusonii (strain ATCC 35469 / DSM 13698 / CCUG 18766 / IAM 14443 / JCM 21226 / LMG 7866 / NBRC 102419 / NCTC 12128 / CDC 0568-73).